We begin with the raw amino-acid sequence, 499 residues long: Potassium voltage-gated channel subfamily A member 2 (499 aa).

Positions 1 to 27 are disordered; that stretch reads MTVATGEPADEAAALPGHPQDTYDPEA. Residues 1 to 125 form a tetramerization domain region; that stretch reads MTVATGEPAD…YELGEEAMEM (125 aa). The Cytoplasmic segment spans residues 1–160; sequence MTVATGEPAD…LLFEYPESSG (160 aa). The helical transmembrane segment at 161–182 threads the bilayer; that stretch reads PARIIAIVSVMVILISIVSFCL. Residues 183–221 are Extracellular-facing; sequence ETLPIFRDENEDMHGGGVTFHTYSNSTIGYQQSTSFTDP. A glycan (N-linked (GlcNAc...) asparagine) is linked at Asn-207. A helical membrane pass occupies residues 222–243; that stretch reads FFIVETLCIIWFSFEFLVRFFA. Cys-244 carries S-palmitoyl cysteine lipidation. Over 244 to 254 the chain is Cytoplasmic; it reads CPSKAGFFTNI. The helical transmembrane segment at 255-275 threads the bilayer; that stretch reads MNIIDIVAIIPYFITLGTELA. Residues 276–289 lie on the Extracellular side of the membrane; sequence EKPEDAQQGQQAMS. A helical; Voltage-sensor membrane pass occupies residues 290 to 310; it reads LAILRVIRLVRVFRIFKLSRH. Residues 311-325 lie on the Cytoplasmic side of the membrane; the sequence is SKGLQILGQTLKASM. An S4-S5 linker region spans residues 312 to 325; the sequence is KGLQILGQTLKASM. A helical transmembrane segment spans residues 326 to 347; sequence RELGLLIFFLFIGVILFSSAVY. At 348–361 the chain is on the extracellular side; the sequence is FAEADERESQFPSI. The helical intramembrane region spans 362 to 373; that stretch reads PDAFWWAVVSMT. A Selectivity filter motif is present at residues 374–379; sequence TVGYGD. An intramembrane segment occupies 374 to 381; that stretch reads TVGYGDMV. Topologically, residues 382 to 388 are extracellular; it reads PTTIGGK. A helical membrane pass occupies residues 389-417; that stretch reads IVGSLCAIAGVLTIALPVPVIVSNFNYFY. At 418–499 the chain is on the cytoplasmic side; it reads HRETEGEEQA…VNITKMLTDV (82 aa). At Tyr-429 the chain carries Phosphotyrosine. A phosphoserine mark is found at Ser-434, Ser-440, Ser-441, and Ser-449. Phosphotyrosine is present on Tyr-458. Residue Ser-468 is modified to Phosphoserine. Positions 497-499 match the PDZ-binding motif; the sequence is TDV.

It belongs to the potassium channel family. A (Shaker) (TC 1.A.1.2) subfamily. Kv1.2/KCNA2 sub-subfamily. Homotetramer and heterotetramer with other channel-forming alpha subunits, such as KCNA1, KCNA4, KCNA5, KCNA6 and KCNA7. Channel activity is regulated by interaction with the beta subunits, including KCNAB1 and KCNAB2. Identified in a complex with KCNA1 and KCNAB2. Identified in a complex with KCNA5 and KCNAB1. Interacts with the beta subunit KCNAB1. Identified in a complex with KCNA4 and FYN. Interacts with PTK2B. Interacts (via C-terminus) with CTTN. Interacts (via N-terminal cytoplasmic domain) with RHOA (GTP-bound form); this regulates channel activity by reducing location at the cell surface in response to CHRM1 activation. Interacts with DRD2. Interacts with SIGMAR1; cocaine consumption leads to increased interaction. Interacts with ADAM22. Interacts with CNTNAP2. Interacts (via C-terminus) with the PDZ domains of DLG1, DLG2 and DLG4. Interacts with ADAM11. Interacts with LYNX1. Phosphorylated on tyrosine residues; phosphorylation increases in response to ischemia. Phosphorylated on tyrosine residues by activated PTK2B/PYK2. Phosphorylation on tyrosine residues suppresses ion channel activity. Phosphorylated on tyrosine residues in response to CHRM1 activation; this abolishes interaction with CTTN. This is probably due to endocytosis of the phosphorylated channel subunits. Phosphorylated on serine residues in response to increased cAMP levels; phosphorylation is apparently not catalyzed by PKA. In terms of processing, N-glycosylated, with complex, sialylated N-glycans. Expressed in a wide variety of gastrointestinal smooth muscles. Not expressed in portal vein, renal artery, and uterus.

It localises to the cell membrane. The protein localises to the membrane. The protein resides in the cell projection. It is found in the axon. Its subcellular location is the synapse. It localises to the presynaptic cell membrane. The protein localises to the synaptosome. The protein resides in the endoplasmic reticulum membrane. It is found in the dendrite. Its subcellular location is the lamellipodium membrane. It localises to the cell junction. The protein localises to the paranodal septate junction. It catalyses the reaction K(+)(in) = K(+)(out). Inhibited by 4-aminopyridine (4-AP). Inhibited by dendrotoxin (DTX) and charybdotoxin (CTX), but not by tetraethylammonium (TEA). Inhibited by tityustoxin-K alpha (TsTX-Kalpha), a toxin that is highly specific for KCNA2. Inhibited by maurotoxin. Inhibited by kappaM conotoxins kappaM-RIIIJ and kappaM-RIIIK. Functionally, voltage-gated potassium channel that mediates transmembrane potassium transport in excitable membranes, primarily in the brain and the central nervous system, but also in the cardiovascular system. Prevents aberrant action potential firing and regulates neuronal output. Forms tetrameric potassium-selective channels through which potassium ions pass in accordance with their electrochemical gradient. The channel alternates between opened and closed conformations in response to the voltage difference across the membrane. Can form functional homotetrameric channels and heterotetrameric channels that contain variable proportions of KCNA1, KCNA2, KCNA4, KCNA5, KCNA6, KCNA7, and possibly other family members as well; channel properties depend on the type of alpha subunits that are part of the channel. Channel properties are modulated by cytoplasmic beta subunits that regulate the subcellular location of the alpha subunits and promote rapid inactivation of delayed rectifier potassium channels. In vivo, membranes probably contain a mixture of heteromeric potassium channel complexes, making it difficult to assign currents observed in intact tissues to any particular potassium channel family member. Homotetrameric KCNA2 forms a delayed-rectifier potassium channel that opens in response to membrane depolarization, followed by slow spontaneous channel closure. In contrast, a heteromultimer formed by KCNA2 and KCNA4 shows rapid inactivation. Regulates neuronal excitability and plays a role as pacemaker in the regulation of neuronal action potentials. KCNA2-containing channels play a presynaptic role and prevent hyperexcitability and aberrant action potential firing. Response to toxins that are selective for KCNA2-containing potassium channels suggests that in Purkinje cells, dendritic subthreshold KCNA2-containing potassium channels prevent random spontaneous calcium spikes, suppressing dendritic hyperexcitability without hindering the generation of somatic action potentials, and thereby play an important role in motor coordination. Plays a role in the induction of long-term potentiation of neuron excitability in the CA3 layer of the hippocampus. May function as down-stream effector for G protein-coupled receptors and inhibit GABAergic inputs to basolateral amygdala neurons. May contribute to the regulation of neurotransmitter release, such as gamma-aminobutyric acid (GABA). Contributes to the regulation of the axonal release of the neurotransmitter dopamine. Reduced KCNA2 expression plays a role in the perception of neuropathic pain after peripheral nerve injury, but not acute pain. Plays a role in the regulation of the time spent in non-rapid eye movement (NREM) sleep. The chain is Potassium voltage-gated channel subfamily A member 2 (KCNA2) from Canis lupus familiaris (Dog).